Consider the following 898-residue polypeptide: Phosphoenolpyruvate carboxylase (898 aa).

Residues His-138 and Lys-561 contribute to the active site.

Belongs to the PEPCase type 1 family. Mg(2+) serves as cofactor.

It catalyses the reaction oxaloacetate + phosphate = phosphoenolpyruvate + hydrogencarbonate. Its function is as follows. Forms oxaloacetate, a four-carbon dicarboxylic acid source for the tricarboxylic acid cycle. The chain is Phosphoenolpyruvate carboxylase from Streptococcus suis (strain 98HAH33).